Reading from the N-terminus, the 376-residue chain is Glutamate 5-kinase (376 aa).

ATP is bound at residue Lys23. Substrate contacts are provided by Ser63, Asp150, and Asn162. ATP-binding positions include 182–183 and 222–228; these read SD and TGGMASK. Positions 284–358 constitute a PUA domain; that stretch reads GGALRIDAGA…GKQTAQLPEG (75 aa).

It belongs to the glutamate 5-kinase family.

The protein resides in the cytoplasm. It carries out the reaction L-glutamate + ATP = L-glutamyl 5-phosphate + ADP. It participates in amino-acid biosynthesis; L-proline biosynthesis; L-glutamate 5-semialdehyde from L-glutamate: step 1/2. Functionally, catalyzes the transfer of a phosphate group to glutamate to form L-glutamate 5-phosphate. The sequence is that of Glutamate 5-kinase from Corynebacterium diphtheriae (strain ATCC 700971 / NCTC 13129 / Biotype gravis).